A 515-amino-acid chain; its full sequence is Alpha-1B adrenergic receptor (515 aa).

The Extracellular segment spans residues 1–45 (MNPDLDTGHNTSAPAQWGELKDANFTGPNQTSSNSTLPQLDVTRA). N-linked (GlcNAc...) asparagine glycosylation is found at Asn-10, Asn-24, and Asn-34. A helical membrane pass occupies residues 46 to 70 (ISVGLVLGAFILFAIVGNILVILSV). Topologically, residues 71-83 (ACNRHLRTPTNYF) are cytoplasmic. Residues 84–105 (IVNLAIADLLLSFTVLPFSATL) form a helical membrane-spanning segment. Residues 106 to 115 (EVLGYWVLGR) are Extracellular-facing. Residues 116 to 141 (IFCDIWAAVDVLCCTASILSLCAISI) form a helical membrane-spanning segment. An intrachain disulfide couples Cys-118 to Cys-195. Topologically, residues 142 to 161 (DRYIGVRYSLQYPTLVTRRK) are cytoplasmic. Residues 162–184 (AILALLSVWVLSTVISIGPLLGW) form a helical membrane-spanning segment. At 185–201 (KEPAPNDDKECGVTEEP) the chain is on the extracellular side. The chain crosses the membrane as a helical span at residues 202–224 (FYALFSSLGSFYIPLAVILVMYC). Topologically, residues 225 to 295 (RVYIVAKRTT…FSREKKAAKT (71 aa)) are cytoplasmic. Thr-264 bears the Phosphothreonine mark. Residues 296–319 (LGIVVGMFILCWLPFFIALPLGSL) traverse the membrane as a helical segment. Residues 320–326 (FSTLKPP) are Extracellular-facing. The chain crosses the membrane as a helical span at residues 327-351 (DAVFKVVFWLGYFNSCLNPIIYPCS). The Cytoplasmic portion of the chain corresponds to 352–515 (SKEFKRAFMR…SNMPLAPGHF (164 aa)). Residue Cys-365 is the site of S-palmitoyl cysteine attachment. A Nuclear localization signal motif is present at residues 368–378 (RSGRRRRRRRR). 2 disordered regions span residues 392 to 428 (GGSL…SPGY) and 473 to 515 (LLGE…PGHF). Residues 410–424 (SCMSGSQRTLPSASP) are compositionally biased toward polar residues.

This sequence belongs to the G-protein coupled receptor 1 family. Adrenergic receptor subfamily. ADRA1B sub-subfamily. Homo- and heterooligomer. Heterooligomerizes with ADRA1B homooligomers in cardiac myocytes. Interacts with CAVIN4.

The protein localises to the nucleus membrane. It localises to the cell membrane. The protein resides in the cytoplasm. Its subcellular location is the membrane. It is found in the caveola. Functionally, this alpha-adrenergic receptor mediates its action by association with G proteins that activate a phosphatidylinositol-calcium second messenger system. Its effect is mediated by G(q) and G(11) proteins. Nuclear ADRA1A-ADRA1B heterooligomers regulate phenylephrine (PE)-stimulated ERK signaling in cardiac myocytes. This is Alpha-1B adrenergic receptor (ADRA1B) from Mesocricetus auratus (Golden hamster).